The chain runs to 372 residues: MRDKVTGARRWVVKIGSALLTADGRGLDRNAMAVWVEQMVALHCAGIELVLVSSGAVAAGMSRLGWVSRPSAMHELQAAASVGQMGLVQAWESSFALHGLQTAQVLLTHDDLSDRKRYLNARSTLRTLVELGVVPVINENDTVVTDEIRFGDNDTLAALVANLVEADLLVILTDRDGMFDADPRNNPDAQLIYEARADDPQLDAVAGGSAGALGRGGMQTKLRAARLAARSGGHTVIVGGRIERVLDRLRAGERLGTLLTPDRSRKAARKQWLAGHLQMRGTLVLDDGAVKAVSQDHKSLLPVGVKAVQGSFRRGEMVVCVDQGGREVARGLVNYSALEAQKILGQPTDAIEALLGYVDGPELVHRDNLVLV.

ATP is bound at residue Lys14. Residues Ser54, Asp141, and Asn153 each coordinate substrate. Residue 173 to 174 (TD) participates in ATP binding. One can recognise a PUA domain in the interval 280-358 (RGTLVLDDGA…DAIEALLGYV (79 aa)).

Belongs to the glutamate 5-kinase family.

The protein resides in the cytoplasm. The enzyme catalyses L-glutamate + ATP = L-glutamyl 5-phosphate + ADP. It functions in the pathway amino-acid biosynthesis; L-proline biosynthesis; L-glutamate 5-semialdehyde from L-glutamate: step 1/2. In terms of biological role, catalyzes the transfer of a phosphate group to glutamate to form L-glutamate 5-phosphate. The protein is Glutamate 5-kinase of Pseudomonas aeruginosa (strain UCBPP-PA14).